The chain runs to 451 residues: Phosphoglucosamine mutase (451 aa).

Serine 102 (phosphoserine intermediate) is an active-site residue. The Mg(2+) site is built by serine 102, aspartate 243, aspartate 245, and aspartate 247. Serine 102 carries the post-translational modification Phosphoserine.

It belongs to the phosphohexose mutase family. Mg(2+) is required as a cofactor. Post-translationally, activated by phosphorylation.

The catalysed reaction is alpha-D-glucosamine 1-phosphate = D-glucosamine 6-phosphate. In terms of biological role, catalyzes the conversion of glucosamine-6-phosphate to glucosamine-1-phosphate. This chain is Phosphoglucosamine mutase, found in Brucella abortus (strain 2308).